Consider the following 273-residue polypeptide: 2,3,4,5-tetrahydropyridine-2,6-dicarboxylate N-succinyltransferase (273 aa).

2 residues coordinate substrate: R106 and D143.

Belongs to the transferase hexapeptide repeat family. In terms of assembly, homotrimer.

It localises to the cytoplasm. The enzyme catalyses (S)-2,3,4,5-tetrahydrodipicolinate + succinyl-CoA + H2O = (S)-2-succinylamino-6-oxoheptanedioate + CoA. The protein operates within amino-acid biosynthesis; L-lysine biosynthesis via DAP pathway; LL-2,6-diaminopimelate from (S)-tetrahydrodipicolinate (succinylase route): step 1/3. This Wolbachia pipientis wMel protein is 2,3,4,5-tetrahydropyridine-2,6-dicarboxylate N-succinyltransferase.